A 403-amino-acid polypeptide reads, in one-letter code: Octaketide synthase 1 (403 aa).

Cysteine 174 is a catalytic residue. Residues serine 281 and 318-321 each bind CoA; that span reads GGRA.

This sequence belongs to the thiolase-like superfamily. Chalcone/stilbene synthases family. Homodimer.

Its pathway is secondary metabolite biosynthesis; flavonoid biosynthesis. Functionally, catalyzes the iterative condensations of 8 molecules of malonyl-CoA to produce aromatic octaketides, SEK4 and SEK4b, the products of the minimal polyketide synthase for the benzoisochromanequinone actinorhodin. May be involved in the biosynthesis of the octaketide barbaloin. This is Octaketide synthase 1 from Aloe arborescens (Kidachi aloe).